The sequence spans 293 residues: DOMON domain-containing protein FRRS1L (293 aa).

Residues 1–28 (MARPPRQHPGVWASLLLLLLTGPAACAA) form the signal peptide. The disordered stretch occupies residues 29 to 61 (SPADDGAGPGGRGPRGRARGDTGADEAVPRHDS). Positions 46–61 (ARGDTGADEAVPRHDS) are enriched in basic and acidic residues. The DOMON domain maps to 119-234 (CDYFLSYRMI…WYYLFAWGPA (116 aa)). Residues 271–291 (TFSSPFCLLLIVALTFYLLMG) traverse the membrane as a helical segment.

Component of the outer core of AMPAR complex. AMPAR complex consists of an inner core made of 4 pore-forming GluA/GRIA proteins (GRIA1, GRIA2, GRIA3 and GRIA4) and 4 major auxiliary subunits arranged in a twofold symmetry. One of the two pairs of distinct binding sites is occupied either by CNIH2, CNIH3 or CACNG2, CACNG3. The other harbors CACNG2, CACNG3, CACNG4, CACNG8 or GSG1L. This inner core of AMPAR complex is complemented by outer core constituents binding directly to the GluA/GRIA proteins at sites distinct from the interaction sites of the inner core constituents. Outer core constituents include at least PRRT1, PRRT2, CKAMP44/SHISA9, FRRS1L and NRN1. The proteins of the inner and outer core serve as a platform for other, more peripherally associated AMPAR constituents. Alone or in combination, these auxiliary subunits control the gating and pharmacology of the AMPAR complex and profoundly impact their biogenesis and protein processing. Expressed in adult and fetal brain. Very weak expression in medulla, spinal cord and in adult ovary.

Its subcellular location is the cell membrane. It localises to the synapse. Functionally, important modulator of glutamate signaling pathway. The chain is DOMON domain-containing protein FRRS1L (FRRS1L) from Homo sapiens (Human).